The following is a 224-amino-acid chain: Polysialic acid transport ATP-binding protein KpsT (224 aa).

Residues 2–223 (IKIENLTKSY…EYKMYQDLDI (222 aa)) enclose the ABC transporter domain. Residue 38–45 (GRNGAGKS) participates in ATP binding.

The protein belongs to the ABC transporter superfamily.

The protein localises to the cell inner membrane. Functionally, putative ATP-binding protein, and an energy coupling component for the transport of polysialic acid across the cytoplasmic membrane. The chain is Polysialic acid transport ATP-binding protein KpsT (kpsT) from Escherichia coli.